The following is a 76-amino-acid chain: DHHQSTDEPSESSKPCCDQCTCTKSIPPQCRCTDVRLNSCHSACSSCVCTFSIPAQCVCVDMKDFCYAPCKSSHDD.

7 disulfides stabilise this stretch: C16/C70, C17/C32, C20/C66, C22/C30, C40/C47, C44/C59, and C49/C57.

It belongs to the Bowman-Birk serine protease inhibitor family. As to quaternary structure, HGI-III exists in a state of equilibrium between monomer, homodimer and trimer, with homodimer being the predominant form. The homodimer is stabilized by the non-covalent interaction between Lys-24 of one subunit and Asp-76 of the other subunit. The homodimer is more thermostable than the monomer. HGGI-I, HGGI-II and HGGI-III exist as monomers. In terms of processing, HGGI-I, HGGI-II and HGGI-III are produced by proteolysis of the N- and C-termini of HGI-III.

Its function is as follows. Inhibitors of trypsin and chymotrypsin. HGGI-III has a higher activity than HGGI-I or HGGI-II. The protein is Horsegram inhibitor 1 of Vigna unguiculata subsp. cylindrica (Horse gram).